A 229-amino-acid polypeptide reads, in one-letter code: 2,3-bisphosphoglycerate-dependent phosphoglycerate mutase (229 aa).

Residues 7 to 14 (RHGQSEWN), 20 to 21 (TG), Arg59, 86 to 89 (ERHY), Lys97, 113 to 114 (RR), and 182 to 183 (GN) contribute to the substrate site. His8 serves as the catalytic Tele-phosphohistidine intermediate. The active-site Proton donor/acceptor is Glu86.

The protein belongs to the phosphoglycerate mutase family. BPG-dependent PGAM subfamily.

It catalyses the reaction (2R)-2-phosphoglycerate = (2R)-3-phosphoglycerate. It functions in the pathway carbohydrate degradation; glycolysis; pyruvate from D-glyceraldehyde 3-phosphate: step 3/5. Functionally, catalyzes the interconversion of 2-phosphoglycerate and 3-phosphoglycerate. In Listeria monocytogenes serotype 4a (strain HCC23), this protein is 2,3-bisphosphoglycerate-dependent phosphoglycerate mutase.